The primary structure comprises 64 residues: Chassatide C7 (64 aa).

Residues 1-35 (VLVASLVMLEAQSSDTIQVPDWGKRLLMNHDSNRV) constitute a propeptide, removed in mature form. Disulfide bonds link Cys-39-Cys-55, Cys-43-Cys-57, and Cys-48-Cys-62.

In terms of tissue distribution, expressed in fruit, pedicel, root and stem but not in leaf (at protein level).

Its function is as follows. Probably participates in a plant defense mechanism. Active against E.coli ATTC25922 but not against S.aureus ATCC 12600 or S.epidermidis ATCC 14990. Has cytotoxic and hemolytic activity. The protein is Chassatide C7 of Chassalia chartacea (Chassalia curviflora).